The chain runs to 110 residues: Large ribosomal subunit protein uL22 (110 aa).

Belongs to the universal ribosomal protein uL22 family. Part of the 50S ribosomal subunit.

Its function is as follows. This protein binds specifically to 23S rRNA; its binding is stimulated by other ribosomal proteins, e.g. L4, L17, and L20. It is important during the early stages of 50S assembly. It makes multiple contacts with different domains of the 23S rRNA in the assembled 50S subunit and ribosome. In terms of biological role, the globular domain of the protein is located near the polypeptide exit tunnel on the outside of the subunit, while an extended beta-hairpin is found that lines the wall of the exit tunnel in the center of the 70S ribosome. The chain is Large ribosomal subunit protein uL22 from Alkaliphilus oremlandii (strain OhILAs) (Clostridium oremlandii (strain OhILAs)).